The chain runs to 215 residues: MKQNRKNLPIILASSSPARIELLNRIKIIPSQIIPADIDETPNLRELPAPLAIRLAYEKAIKIASQIEESAIIIAANTVAAVGRRILPKATTYEEVKNCIKMLSGRRHRIYTGLCIIKKENDQLTVRQKIVQTIVKFKKLSDEEINFYCSLDEGIDKAGGCKISGYAEAFISFISGSYSNVMGLPLFETVNALTSLGFRCSSIMPAKMNYCHSAT.

This sequence belongs to the Maf family. A divalent metal cation is required as a cofactor.

The protein localises to the cytoplasm. It carries out the reaction a ribonucleoside 5'-triphosphate + H2O = a ribonucleoside 5'-phosphate + diphosphate + H(+). The enzyme catalyses a 2'-deoxyribonucleoside 5'-triphosphate + H2O = a 2'-deoxyribonucleoside 5'-phosphate + diphosphate + H(+). Functionally, nucleoside triphosphate pyrophosphatase. May have a dual role in cell division arrest and in preventing the incorporation of modified nucleotides into cellular nucleic acids. The polypeptide is Nucleoside triphosphate pyrophosphatase (Rickettsia conorii (strain ATCC VR-613 / Malish 7)).